The sequence spans 547 residues: Sesterfisheric acid synthase (547 aa).

Residues 19–39 (IMGCSLGTGLLVSMIIYNYFF) form a helical membrane-spanning segment. Asn341 and Asn404 each carry an N-linked (GlcNAc...) asparagine glycan. Residue Cys490 participates in heme binding.

The protein belongs to the cytochrome P450 family. It depends on heme as a cofactor.

Its subcellular location is the membrane. The enzyme catalyses sesterfisherol + 3 reduced [NADPH--hemoprotein reductase] + 3 O2 = sesterfisherate + 3 oxidized [NADPH--hemoprotein reductase] + 4 H2O + 4 H(+). It participates in secondary metabolite biosynthesis; terpenoid biosynthesis. Its function is as follows. Cytochrome P450 monooxygenase; part of the gene cluster that mediates the biosynthesis of sesterfisheric acid. The bifunctional terpene synthase NfSS converts DMAPP and IPP, and also GGPP, into sesterfisherol. The C-terminal prenyltransferase (PT) domain of NfSS catalyzes formation of GFPP, whereas the N-terminal terpene cyclase (TC) domain catalyzes the cyclization of GFPP to sesterfisherol. The cytochrome P450 monooxygenase NfP450 then catalyzes oxidative modifications of sesterfisherol into sesterfisheric acid. The sequence is that of Sesterfisheric acid synthase from Neosartorya fischeri (strain ATCC 1020 / DSM 3700 / CBS 544.65 / FGSC A1164 / JCM 1740 / NRRL 181 / WB 181) (Aspergillus fischerianus).